The sequence spans 140 residues: Protein ARABIDOPSIS THALIANA ANTHER 7 (140 aa).

Residues 1-20 (MKIHAILVVAFLVLMKTAVS) form the signal peptide. Disulfide bonds link cysteine 29–cysteine 87, cysteine 39–cysteine 54, cysteine 55–cysteine 111, and cysteine 85–cysteine 125.

This sequence belongs to the plant LTP family. In terms of tissue distribution, tapetum-specific. Also present in pollen.

The protein localises to the endoplasmic reticulum lumen. The polypeptide is Protein ARABIDOPSIS THALIANA ANTHER 7 (Arabidopsis thaliana (Mouse-ear cress)).